We begin with the raw amino-acid sequence, 292 residues long: ATP synthase gamma chain (292 aa).

Belongs to the ATPase gamma chain family. F-type ATPases have 2 components, CF(1) - the catalytic core - and CF(0) - the membrane proton channel. CF(1) has five subunits: alpha(3), beta(3), gamma(1), delta(1), epsilon(1). CF(0) has three main subunits: a, b and c.

It localises to the cell inner membrane. Its function is as follows. Produces ATP from ADP in the presence of a proton gradient across the membrane. The gamma chain is believed to be important in regulating ATPase activity and the flow of protons through the CF(0) complex. This Syntrophobacter fumaroxidans (strain DSM 10017 / MPOB) protein is ATP synthase gamma chain.